Here is a 264-residue protein sequence, read N- to C-terminus: MQSLNVNGTLMTYSESGDPHAPTLFLLSGWCQDHRLFKNLAPLLARDFHVICPDWRGHDAKQTDSGDFDSQTLAQDLLAFIDAKGIRDFQMVSTSHGCWVNIDVCEQLGAARLPKTIVIDWLLQPHPGFWQQLAEGQHPTEYVAGRQSFFDEWAETTDNADVLNHLRNEMPWFHGEMWQRACREIEANYRTWGSPLDRMESLPQKPEICHIYSQPLSQDYRQLQLDFAAGHSWFHPRHIPGRTHFPSLENPVAVAQAIREFLQA.

Substrate is bound by residues 30-32 (WCQ), 94-95 (TS), and tryptophan 153. Residue histidine 244 is the Proton donor/acceptor of the active site.

The protein belongs to the AB hydrolase superfamily. It depends on None. Contrary to most other dioxygenases, this enzyme does not require a cofactor for catalysis. as a cofactor.

It catalyses the reaction 3-hydroxy-1H-quinolin-4-one + O2 = N-formylanthranilate + CO + H(+). Ring-cleaving dioxygenase involved in oxoquinoline degradation and utilization. The chain is 1H-3-hydroxy-4-oxoquinoline 2,4-dioxygenase (qdo) from Pseudomonas putida (Arthrobacter siderocapsulatus).